Here is a 380-residue protein sequence, read N- to C-terminus: GTP-binding protein 10 (380 aa).

One can recognise an Obg domain in the interval 13-148 (GNFVDNVRLY…RNIRLDLKLI (136 aa)). The 196-residue stretch at 149 to 344 (ADFGLVGFPN…LKSLIRQSLE (196 aa)) folds into the OBG-type G domain. GTP-binding positions include 155–162 (GFPNAGKS), 202–206 (DLPGL), and 278–281 (NKMD).

It belongs to the TRAFAC class OBG-HflX-like GTPase superfamily. OBG GTPase family.

The protein resides in the nucleus. Its subcellular location is the nucleolus. Functionally, may be involved in the ribosome maturation process. This is GTP-binding protein 10 (gtpbp10) from Danio rerio (Zebrafish).